The following is a 411-amino-acid chain: Serpin A3-3 (411 aa).

An N-terminal signal peptide occupies residues 1–24 (MRAERLSPLLALGLLVAGIRSVHC). Asn-100, Asn-180, Asn-230, Asn-264, and Asn-318 each carry an N-linked (GlcNAc...) asparagine glycan.

Belongs to the serpin family. As to quaternary structure, homodimer.

The protein resides in the cytoplasmic vesicle. It localises to the secretory vesicle. It is found in the chromaffin granule. The protein localises to the secreted. In terms of biological role, serine protease inhibitor. Strongly inhibits elastase and trypsin stoichiometrically at the molar ratio of 1:1. Acts as a moderate inhibitor of plasmin and chymotrypsin. Does not inhibit thrombin, urokinase, kallikrein, tissue plasminogen activator, cathepsin G or the cysteine proteases papain, cathepsin B or cathepsin L. This chain is Serpin A3-3 (SERPINA3-3), found in Bos taurus (Bovine).